Here is a 148-residue protein sequence, read N- to C-terminus: UPF0756 membrane protein NGK_2061 (148 aa).

4 helical membrane passes run 10–32 (LVTLILLGVVSNNNSITVSATIL), 50–70 (HGLNLGIILLTIGVLSPLVSG), 85–105 (MISAVFIGIFVAWLAGCGVPL), and 116–136 (LLIGTVIGVAFMGGIPVGPLI).

The protein belongs to the UPF0756 family.

Its subcellular location is the cell membrane. This Neisseria gonorrhoeae (strain NCCP11945) protein is UPF0756 membrane protein NGK_2061.